A 346-amino-acid polypeptide reads, in one-letter code: Eukaryotic translation initiation factor 3 subunit I (346 aa).

WD repeat units follow at residues 8–47, 50–89, 150–189, 192–233, and 289–328; these read GHER…RLGT, GHNG…IAHS, EGCA…CLEI, LHKQ…KTYE, and DHFG…FDFK.

Belongs to the eIF-3 subunit I family. In terms of assembly, component of the eukaryotic translation initiation factor 3 (eIF-3) complex.

It is found in the cytoplasm. In terms of biological role, component of the eukaryotic translation initiation factor 3 (eIF-3) complex, which is involved in protein synthesis of a specialized repertoire of mRNAs and, together with other initiation factors, stimulates binding of mRNA and methionyl-tRNAi to the 40S ribosome. The eIF-3 complex specifically targets and initiates translation of a subset of mRNAs involved in cell proliferation. The chain is Eukaryotic translation initiation factor 3 subunit I from Eremothecium gossypii (strain ATCC 10895 / CBS 109.51 / FGSC 9923 / NRRL Y-1056) (Yeast).